The chain runs to 341 residues: tRNA N6-adenosine threonylcarbamoyltransferase (341 aa).

Residues His-115 and His-119 each coordinate Fe cation. Residues 137 to 141 (IVSGG), Asp-170, Gly-183, Asp-187, and Asn-276 contribute to the substrate site. Asp-304 lines the Fe cation pocket.

It belongs to the KAE1 / TsaD family. It depends on Fe(2+) as a cofactor.

Its subcellular location is the cytoplasm. The catalysed reaction is L-threonylcarbamoyladenylate + adenosine(37) in tRNA = N(6)-L-threonylcarbamoyladenosine(37) in tRNA + AMP + H(+). Its function is as follows. Required for the formation of a threonylcarbamoyl group on adenosine at position 37 (t(6)A37) in tRNAs that read codons beginning with adenine. Is involved in the transfer of the threonylcarbamoyl moiety of threonylcarbamoyl-AMP (TC-AMP) to the N6 group of A37, together with TsaE and TsaB. TsaD likely plays a direct catalytic role in this reaction. This Staphylococcus aureus (strain MSSA476) protein is tRNA N6-adenosine threonylcarbamoyltransferase.